We begin with the raw amino-acid sequence, 135 residues long: Cytochrome c2 (135 aa).

The N-terminal stretch at 1–23 is a signal peptide; sequence MKKGFLAAGVFAAVAFASGAALA. Cysteine 37, cysteine 40, histidine 41, and methionine 114 together coordinate heme c.

This sequence belongs to the cytochrome c family. In terms of processing, binds 1 heme c group covalently per subunit.

In terms of biological role, cytochrome c2 is found mainly in purple, non-sulfur, photosynthetic bacteria where it functions as the electron donor to the oxidized bacteriochlorophyll in the photophosphorylation pathway. However, it may also have a role in the respiratory chain and is found in some non-photosynthetic bacteria. The polypeptide is Cytochrome c2 (cycA) (Rhodospirillum rubrum (strain ATCC 11170 / ATH 1.1.1 / DSM 467 / LMG 4362 / NCIMB 8255 / S1)).